A 360-amino-acid chain; its full sequence is DNA integrity scanning protein DisA (360 aa).

The DAC domain occupies 9–147 (DDEIIEVLRM…GSRKYILRET (139 aa)). ATP is bound by residues glycine 76, leucine 94, and 107–111 (TRHKT).

Belongs to the DisA family. In terms of assembly, homooctamer. Mg(2+) is required as a cofactor.

It carries out the reaction 2 ATP = 3',3'-c-di-AMP + 2 diphosphate. Participates in a DNA-damage check-point that is active prior to asymmetric division when DNA is damaged. DisA forms globular foci that rapidly scan along the chromosomes during sporulation, searching for lesions. When a lesion is present, DisA pauses at the lesion site. This triggers a cellular response that culminates in a temporary block in sporulation initiation. Its function is as follows. Also has diadenylate cyclase activity, catalyzing the condensation of 2 ATP molecules into cyclic di-AMP (c-di-AMP). c-di-AMP acts as a signaling molecule that couples DNA integrity with progression of sporulation. The rise in c-di-AMP level generated by DisA while scanning the chromosome, operates as a positive signal that advances sporulation; upon encountering a lesion, the DisA focus arrests at the damaged site and halts c-di-AMP synthesis. The chain is DNA integrity scanning protein DisA from Acetivibrio thermocellus (strain ATCC 27405 / DSM 1237 / JCM 9322 / NBRC 103400 / NCIMB 10682 / NRRL B-4536 / VPI 7372) (Clostridium thermocellum).